The following is a 98-amino-acid chain: NADH-ubiquinone oxidoreductase chain 4L (98 aa).

A run of 3 helical transmembrane segments spans residues 1–21 (MTLI…GFLM), 29–49 (ALLC…LTVL), and 59–79 (MPII…ALLV).

Belongs to the complex I subunit 4L family. As to quaternary structure, core subunit of respiratory chain NADH dehydrogenase (Complex I) which is composed of 45 different subunits.

It localises to the mitochondrion inner membrane. The enzyme catalyses a ubiquinone + NADH + 5 H(+)(in) = a ubiquinol + NAD(+) + 4 H(+)(out). Its function is as follows. Core subunit of the mitochondrial membrane respiratory chain NADH dehydrogenase (Complex I) which catalyzes electron transfer from NADH through the respiratory chain, using ubiquinone as an electron acceptor. Part of the enzyme membrane arm which is embedded in the lipid bilayer and involved in proton translocation. This is NADH-ubiquinone oxidoreductase chain 4L (MT-ND4L) from Inia geoffrensis (Amazon river dolphin).